A 176-amino-acid chain; its full sequence is MFHATTIVAVKKGESVAIAGDGQVTFSQNMIMKSTAKKVRKLYNGKVLVGFAGSVADAITLCEKFEEKLEQNSGNLQKSVVELAKEWRQDKVLRRLEALMVVADKDHLFVVSGSGEVVEPDDNIAAIGSGGPYALAAARALLQSTDLSAAEIARKALEIAASICVYTNNNITVLEL.

Residue Thr5 is part of the active site. Residues Ala161, Cys164, and Thr167 each coordinate Na(+).

The protein belongs to the peptidase T1B family. HslV subfamily. As to quaternary structure, a double ring-shaped homohexamer of HslV is capped on each side by a ring-shaped HslU homohexamer. The assembly of the HslU/HslV complex is dependent on binding of ATP.

It localises to the cytoplasm. The enzyme catalyses ATP-dependent cleavage of peptide bonds with broad specificity.. With respect to regulation, allosterically activated by HslU binding. Protease subunit of a proteasome-like degradation complex believed to be a general protein degrading machinery. The sequence is that of ATP-dependent protease subunit HslV from Caldicellulosiruptor bescii (strain ATCC BAA-1888 / DSM 6725 / KCTC 15123 / Z-1320) (Anaerocellum thermophilum).